Here is a 196-residue protein sequence, read N- to C-terminus: Holliday junction branch migration complex subunit RuvA (196 aa).

The interval 1 to 63 (MYDYIKGKLS…DDAHLLFGFH (63 aa)) is domain I. A domain II region spans residues 64–142 (TENEKEIFLN…EASGESATSR (79 aa)). Residues 143–148 (KVSSEQ) are flexible linker. Residues 148-196 (QNSNLEEAMEALLALGYKATELKKVKAFFEGTNETVEQYIKSSLKMLMK) are domain III.

The protein belongs to the RuvA family. As to quaternary structure, homotetramer. Forms an RuvA(8)-RuvB(12)-Holliday junction (HJ) complex. HJ DNA is sandwiched between 2 RuvA tetramers; dsDNA enters through RuvA and exits via RuvB. An RuvB hexamer assembles on each DNA strand where it exits the tetramer. Each RuvB hexamer is contacted by two RuvA subunits (via domain III) on 2 adjacent RuvB subunits; this complex drives branch migration. In the full resolvosome a probable DNA-RuvA(4)-RuvB(12)-RuvC(2) complex forms which resolves the HJ.

It localises to the cytoplasm. Functionally, the RuvA-RuvB-RuvC complex processes Holliday junction (HJ) DNA during genetic recombination and DNA repair, while the RuvA-RuvB complex plays an important role in the rescue of blocked DNA replication forks via replication fork reversal (RFR). RuvA specifically binds to HJ cruciform DNA, conferring on it an open structure. The RuvB hexamer acts as an ATP-dependent pump, pulling dsDNA into and through the RuvAB complex. HJ branch migration allows RuvC to scan DNA until it finds its consensus sequence, where it cleaves and resolves the cruciform DNA. In Streptococcus agalactiae serotype Ia (strain ATCC 27591 / A909 / CDC SS700), this protein is Holliday junction branch migration complex subunit RuvA.